A 647-amino-acid chain; its full sequence is MGKIRKLDDQLSNLIAAGEVVERPASVVKELVENSIDANSTSIEIHLEEAGLSKIRIIDNGDGIAEEDCIVAFERHATSKIKDENDLFRIRTLGFRGEALPSIASVSELELITSTGDAPGTHLIIKGGDIIKQEKTASRKGTDITVQNLFFNTPARLKYMKTIHTELGNITDIVYRIAMSHPEVSLKLFHNEKKLLHTSGNGDVRQVLASIYSIQVAKKLVPIEAESLDFTIKGYVTLPEVTRASRNYMSTIVNGRYVRNFVLMKAIQQGYHTLLPVGRYPIGFLSIEMDPMLVDVNVHPAKLEVRFSKEQELLKLIEETLQAAFKKIQLIPDAGVTTKKKEKDESVQEQFKFEHAKPKEPSMPEIILPTGMDEKQEEPLAVKQPAQLWQPPKQEWQPPQSLVREEQSWQPSTKSIIEEPIREEKSWDSNDEDFELEELEEEVQEIKEIEMNGNDLPPLYPIGQMHGTYIFAQNDKGLYMIDQHAAQERINYEYFRDKVGRVAQEVQELLVPYRIDLSLTEFLRVEEQLEELKKVGLFLEQFGHQSFIVRSHPTWFPKGQETEIIDEMMEQVVKLKKVDIKKLREEAAIMMSCKASIKANQYLTNDQIFALLEELRTTTNPYTCPHGRPILVHHSTYELEKMFKRVM.

This sequence belongs to the DNA mismatch repair MutL/HexB family.

Its function is as follows. This protein is involved in the repair of mismatches in DNA. It is required for dam-dependent methyl-directed DNA mismatch repair. May act as a 'molecular matchmaker', a protein that promotes the formation of a stable complex between two or more DNA-binding proteins in an ATP-dependent manner without itself being part of a final effector complex. This Bacillus cereus (strain ATCC 10987 / NRS 248) protein is DNA mismatch repair protein MutL.